The sequence spans 335 residues: Taste receptor type 2 member 119 (335 aa).

Residues 1–7 (MMEGHML) lie on the Extracellular side of the membrane. A helical transmembrane segment spans residues 8 to 28 (FFLLVVVVQFLTGVLANGLIV). Topologically, residues 29–43 (VVNAIDLIMWKKMAP) are cytoplasmic. A helical transmembrane segment spans residues 44 to 64 (LDLLLFCLATSRIILQLCILF). Over 65–81 (AQLGLSCLVRHTLFADN) the chain is Extracellular. An N-linked (GlcNAc...) asparagine glycan is attached at Asn-81. The chain crosses the membrane as a helical span at residues 82–102 (VTFVYIINELSLWFATWLGVF). Over 103–124 (YCAKIATIPHPLFLWLKMRISR) the chain is Cytoplasmic. The helical transmembrane segment at 125–145 (LVPWLILASVVYVTVTTFIHS) threads the bilayer. At 146 to 176 (RETSELPKQIFISFFSKNTTRVRPAHATLLS) the chain is on the extracellular side. An N-linked (GlcNAc...) asparagine glycan is attached at Asn-163. The helical transmembrane segment at 177–197 (VFVFGLTLPFLIFTVAVLLLL) threads the bilayer. The Cytoplasmic segment spans residues 198-224 (SSLWNHSRQMRTMVGTREPSRHALVSA). A helical transmembrane segment spans residues 225 to 245 (MLSILSFLILYLSHDMVAVLI). The Extracellular portion of the chain corresponds to 246-256 (CTQGLHFGSRT). The chain crosses the membrane as a helical span at residues 257-277 (FAFCLLVIGMYPSLHSIVLIL). Over 278–335 (GNPKLKRNAKTFIVHCKCCHCARAWVTSRNPRLSDLPVPATHHSANKTSCSEACIMPS) the chain is Cytoplasmic.

The protein belongs to the G-protein coupled receptor T2R family. As to expression, expressed in subsets of taste receptor cells of the tongue and palate epithelium and exclusively in gustducin-positive cells. Expressed in 15% taste bud cells in circumvallate and foliate papillae but only in 2% in fungiform papillae. Expressed in the gastro and duodenal tissue. Not expressed in colon, liver, heart and kidney.

It is found in the membrane. Gustducin-coupled receptor implicated in the perception of bitter compounds in the oral cavity and the gastrointestinal tract. Signals through PLCB2 and the calcium-regulated cation channel TRPM5. The chain is Taste receptor type 2 member 119 (Tas2r119) from Mus musculus (Mouse).